Here is a 151-residue protein sequence, read N- to C-terminus: Transcriptional repressor NrdR (151 aa).

Residues 3 to 34 fold into a zinc finger; sequence CPYCAYGESKVVDSRSTEDGSSIRRRRECLKC. In terms of domain architecture, ATP-cone spans 49–139; the sequence is ILVIKKNMSR…VYRQFKDINT (91 aa).

Belongs to the NrdR family. Requires Zn(2+) as cofactor.

Negatively regulates transcription of bacterial ribonucleotide reductase nrd genes and operons by binding to NrdR-boxes. The sequence is that of Transcriptional repressor NrdR from Clostridium botulinum (strain ATCC 19397 / Type A).